Reading from the N-terminus, the 69-residue chain is Metallothionein-like protein 3 (69 aa).

The protein belongs to the metallothionein superfamily. Type 15 family. As to expression, expressed in leaf mesophyll cells, root tips, and at low levels in anthers.

Its function is as follows. Metallothioneins have a high content of cysteine residues that bind various heavy metals. Functions as a metal chelator of copper (Cu) and zinc (Zn). Plays a role in Cu homeostasis, specifically in the remobilization of Cu from senescing leaves. The mobilization of Cu from internal sources is important for seed development. The protein is Metallothionein-like protein 3 of Arabidopsis thaliana (Mouse-ear cress).